The primary structure comprises 465 residues: Argininosuccinate lyase (465 aa).

It belongs to the lyase 1 family. Argininosuccinate lyase subfamily.

The protein localises to the cytoplasm. It catalyses the reaction 2-(N(omega)-L-arginino)succinate = fumarate + L-arginine. The protein operates within amino-acid biosynthesis; L-arginine biosynthesis; L-arginine from L-ornithine and carbamoyl phosphate: step 3/3. This chain is Argininosuccinate lyase, found in Rhodopseudomonas palustris (strain BisB5).